The primary structure comprises 87 residues: Protein moa-2 (87 aa).

The disordered stretch occupies residues 23-87; sequence GTAMRHEPSR…VWTASREESS (65 aa). Basic and acidic residues-rich tracts occupy residues 26 to 39 and 50 to 63; these read MRHEPSRMDCESAP and RNEHVYCRCGEREP.

The sequence is that of Protein moa-2 from Caenorhabditis elegans.